A 123-amino-acid polypeptide reads, in one-letter code: Gamma-synuclein (123 aa).

A run of 2 repeats spans residues 20-30 (EKTKQGVTEAA) and 31-41 (EKTKEGVMYVG). A 4 X 11 AA tandem repeats of [EGSA]-K-T-K-[EQ]-[GQ]-V-X(4) region spans residues 20 to 67 (EKTKQGVTEAAEKTKEGVMYVGTKTKENVVQSVTSVAEKTKEQANAVS). The stretch at 42 to 56 (TKTKENVVQSVTSVA) is one 3; approximate repeat. Repeat unit 4 spans residues 57 to 67 (EKTKEQANAVS). Residues S67 and S72 each carry the phosphoserine modification. The disordered stretch occupies residues 91 to 123 (TTGVVRKEDLEPPAQDQEAKEQEENEEAKSGED). Residues 107-123 (QEAKEQEENEEAKSGED) are compositionally biased toward basic and acidic residues. Position 120 is a phosphoserine; by BARK1, CaMK2 and CK2 (S120).

This sequence belongs to the synuclein family. May be a centrosome-associated protein. Interacts with MYOC; affects its secretion and its aggregation. In terms of processing, phosphorylated. Phosphorylation by GRK5 appears to occur on residues distinct from the residue phosphorylated by other kinases. As to expression, highly expressed in brain, particularly in the substantia nigra. Also expressed in the corpus callosum, heart, skeletal muscle, ovary, testis, colon and spleen. Weak expression in pancreas, kidney and lung. Expressed predominantly in the cell bodies and axons of primary sensory neurons, sympathetic neurons and motoneurons.

Its subcellular location is the cytoplasm. The protein localises to the perinuclear region. It is found in the cytoskeleton. It localises to the microtubule organizing center. The protein resides in the centrosome. Its subcellular location is the spindle. Its function is as follows. Plays a role in neurofilament network integrity. May be involved in modulating axonal architecture during development and in the adult. In vitro, increases the susceptibility of neurofilament-H to calcium-dependent proteases. May also function in modulating the keratin network in skin. Activates the MAPK and Elk-1 signal transduction pathway. The chain is Gamma-synuclein (Sncg) from Mus musculus (Mouse).